The primary structure comprises 387 residues: Protochlorophyllide reductase A, chloroplastic (387 aa).

The transit peptide at 1 to 35 (MALQVQAALLPSALSVPKKGNLSAVVKEPGFLSVS) directs the protein to the chloroplast.

This sequence belongs to the short-chain dehydrogenases/reductases (SDR) family. POR subfamily.

Its subcellular location is the plastid. The protein localises to the chloroplast. It carries out the reaction chlorophyllide a + NADP(+) = protochlorophyllide a + NADPH + H(+). The protein operates within porphyrin-containing compound metabolism; chlorophyll biosynthesis. Its function is as follows. Phototransformation of protochlorophyllide (Pchlide) to chlorophyllide (Chlide). The chain is Protochlorophyllide reductase A, chloroplastic (PORA) from Oryza sativa subsp. japonica (Rice).